The primary structure comprises 218 residues: Ribose-5-phosphate isomerase A (218 aa).

Substrate is bound by residues 28–31 (TGST), 81–84 (DGAD), and 94–97 (KGGG). The active-site Proton acceptor is the glutamate 103. A substrate-binding site is contributed by lysine 121.

It belongs to the ribose 5-phosphate isomerase family. As to quaternary structure, homodimer.

It carries out the reaction aldehydo-D-ribose 5-phosphate = D-ribulose 5-phosphate. It participates in carbohydrate degradation; pentose phosphate pathway; D-ribose 5-phosphate from D-ribulose 5-phosphate (non-oxidative stage): step 1/1. Catalyzes the reversible conversion of ribose-5-phosphate to ribulose 5-phosphate. The protein is Ribose-5-phosphate isomerase A of Yersinia pseudotuberculosis serotype IB (strain PB1/+).